The sequence spans 415 residues: MNVLVIGAGGREHALAYKLNQSNLVKQVFVIPGNEAMTPIAEVHTEISESDHQGILDFAKQQNVDWVVIGPEQPLIDGLADILRANGFKVFGPNKQAAQIEGSKLFAKKIMEKYNIPTADYKEVERKKDALTYIENCEFPVVVKKDGLAAGKGVIIADTIEAARSAIEIMYGDEEEGTVVFETFLEGEEFSLMTFVNGELAVPFDCIAQDHKRAFDHDEGPNTGGMGAYCPVPHISDDVLKLTNETIAQPIAKAMLNEGYQFFGVLYIGAILTKDGPKVIEFNARFGDPEAQVLLSRMESDLMQHIIDLDEGKRTEFKWKNEAIVGVMLASKGYPDAYEKGHKVSGFDLNENYFVSGLKKQGDTFVTSGGRVILAIGKGDNVHDAQRDAYEKVSQIQSDHLFYRHDIANKALQLK.

The region spanning 108–311 (KKIMEKYNIP…LMQHIIDLDE (204 aa)) is the ATP-grasp domain. ATP is bound at residue 134–191 (IENCEFPVVVKKDGLAAGKGVIIADTIEAARSAIEIMYGDEEEGTVVFETFLEGEEFS). Positions 281 and 283 each coordinate Mg(2+).

It belongs to the GARS family. The cofactor is Mg(2+). It depends on Mn(2+) as a cofactor.

The enzyme catalyses 5-phospho-beta-D-ribosylamine + glycine + ATP = N(1)-(5-phospho-beta-D-ribosyl)glycinamide + ADP + phosphate + H(+). It participates in purine metabolism; IMP biosynthesis via de novo pathway; N(1)-(5-phospho-D-ribosyl)glycinamide from 5-phospho-alpha-D-ribose 1-diphosphate: step 2/2. The chain is Phosphoribosylamine--glycine ligase from Staphylococcus aureus (strain MRSA252).